A 136-amino-acid chain; its full sequence is Large ribosomal subunit protein uL16 (136 aa).

Belongs to the universal ribosomal protein uL16 family. Part of the 50S ribosomal subunit.

Functionally, binds 23S rRNA and is also seen to make contacts with the A and possibly P site tRNAs. The sequence is that of Large ribosomal subunit protein uL16 from Pseudoalteromonas atlantica (strain T6c / ATCC BAA-1087).